The sequence spans 473 residues: DNA (cytosine-5)-methyltransferase DRM1A (473 aa).

The 42-residue stretch at Ser-20 to Tyr-61 folds into the UBA 1 domain. Residues Glu-84–Asp-101 show a composition bias toward acidic residues. The interval Glu-84–Glu-115 is disordered. The 21-residue stretch at Glu-120–Glu-140 folds into the UBA 2 domain. Positions Val-204–Ile-431 constitute an SAM-dependent MTase DRM-type domain.

The protein belongs to the class I-like SAM-binding methyltransferase superfamily. DRM-methyltransferase family.

It localises to the nucleus. It catalyses the reaction a 2'-deoxycytidine in DNA + S-adenosyl-L-methionine = a 5-methyl-2'-deoxycytidine in DNA + S-adenosyl-L-homocysteine + H(+). Its function is as follows. Involved in de novo DNA methylation. Involved in RNA-directed DNA methylation (RdDM). In Oryza sativa subsp. japonica (Rice), this protein is DNA (cytosine-5)-methyltransferase DRM1A.